The primary structure comprises 85 residues: MAHKKGQGSTQNNRDSAGRRLGVKKYGGEVVRAGNIIIRQRGTRVHLGQNVGMGKDHTIYSLIDGVVKFEQKDKNRKKVSVYAAS.

Positions Met-1–Val-23 are disordered.

This sequence belongs to the bacterial ribosomal protein bL27 family.

The chain is Large ribosomal subunit protein bL27 from Aliarcobacter butzleri (strain RM4018) (Arcobacter butzleri).